A 79-amino-acid chain; its full sequence is Protein OPG081 (79 aa).

Over 1–3 (MAD) the chain is Intravirion. Residues 4 to 24 (AITVLTAIGITVLMLLMVISG) form a helical membrane-spanning segment. At 25–47 (TAMIVKELNPNDIFTMQSLKFNR) the chain is on the virion surface side. A helical transmembrane segment spans residues 48 to 68 (AVTIFKYIGLFIYIPGTIILY). The Intravirion segment spans residues 69–79 (ATYIKSLLMKS).

This sequence belongs to the orthopoxvirus OPG081 family.

The protein resides in the virion membrane. Functionally, envelope protein. The protein is Protein OPG081 (OPG081) of Variola virus.